The primary structure comprises 665 residues: DNA ligase (665 aa).

NAD(+) is bound by residues 32-36 (DSEYD), 81-82 (SL), and Glu-110. Lys-112 (N6-AMP-lysine intermediate) is an active-site residue. The NAD(+) site is built by Arg-133, Glu-167, Lys-283, and Lys-307. The Zn(2+) site is built by Cys-401, Cys-404, Cys-419, and Cys-424. The BRCT domain maps to 586 to 665 (EGHPDFSGKT…AAFIEKQNGI (80 aa)).

Belongs to the NAD-dependent DNA ligase family. LigA subfamily. Requires Mg(2+) as cofactor. It depends on Mn(2+) as a cofactor.

It catalyses the reaction NAD(+) + (deoxyribonucleotide)n-3'-hydroxyl + 5'-phospho-(deoxyribonucleotide)m = (deoxyribonucleotide)n+m + AMP + beta-nicotinamide D-nucleotide.. In terms of biological role, DNA ligase that catalyzes the formation of phosphodiester linkages between 5'-phosphoryl and 3'-hydroxyl groups in double-stranded DNA using NAD as a coenzyme and as the energy source for the reaction. It is essential for DNA replication and repair of damaged DNA. This Staphylococcus epidermidis (strain ATCC 35984 / DSM 28319 / BCRC 17069 / CCUG 31568 / BM 3577 / RP62A) protein is DNA ligase.